Consider the following 1604-residue polypeptide: Metabotropic glutamate receptor-like protein R (1604 aa).

The first 27 residues, 1 to 27, serve as a signal peptide directing secretion; it reads MVIKKPFIFIFICFLICLLICIDLTNC. At 28 to 1149 the chain is on the extracellular side; it reads NTINNNNNNN…TDVSKTKIAK (1122 aa). Residues 38 to 69 are compositionally biased toward low complexity; it reads NNNNNNNNNNNNNNNNNNNNNNNNNNNNNNDN. The interval 38-72 is disordered; the sequence is NNNNNNNNNNNNNNNNNNNNNNNNNNNNNNDNNEN. Residues 98–133 are a coiled coil; that stretch reads DFYINKIKKEIKDREKYKNNIENEILKINSQKKRKK. The tract at residues 213-263 is disordered; the sequence is NNNNNNNNNNNNNNNNNNKNNNNNNNNKNNNNNNNNKNNNNNNNNKNNNKN. Residues Asn-285, Asn-327, Asn-359, Asn-375, Asn-489, Asn-498, Asn-525, Asn-577, Asn-593, Asn-624, Asn-768, Asn-837, Asn-841, Asn-851, Asn-864, Asn-876, Asn-885, Asn-888, Asn-913, Asn-967, Asn-991, Asn-1097, and Asn-1109 are each glycosylated (N-linked (GlcNAc...) asparagine). A helical transmembrane segment spans residues 1150–1170; the sequence is IIIGISAIIVSIGVLITAILT. Residues 1171 to 1184 lie on the Cytoplasmic side of the membrane; that stretch reads FIYRKRKIMRYSNP. The chain crosses the membrane as a helical span at residues 1185-1205; the sequence is VFLLIILVGCVCGLVSTFVSF. Residues 1206 to 1211 lie on the Extracellular side of the membrane; the sequence is STTSAT. A helical membrane pass occupies residues 1212 to 1232; that stretch reads CSIRMVLIPLFFFIITSAIFI. Over 1233 to 1256 the chain is Cytoplasmic; that stretch reads KQYRVYCLIRGVEELHDMSIENSY. The helical transmembrane segment at 1257–1277 threads the bilayer; sequence LLKLQSFILIIPAILIAVSVI. At 1278–1304 the chain is on the extracellular side; that stretch reads ATRMHRKYNFDLQKETIQAYCYSKNFY. Residues 1305–1325 traverse the membrane as a helical segment; the sequence is IIFICLALYEFSILLYGCWIV. Residues 1326-1340 are Cytoplasmic-facing; the sequence is IKCRQYRSFPGSFNE. The chain crosses the membrane as a helical span at residues 1341–1361; it reads FFYIGVLIYVLTVILVVSIPI. Topologically, residues 1362–1372 are extracellular; it reads GFALLNSALTD. The helical transmembrane segment at 1373-1393 threads the bilayer; that stretch reads FLLYSIPILVLIVAIIGLLFA. At 1394-1604 the chain is on the cytoplasmic side; that stretch reads PKFYFLFRTD…KSSQNSPLLD (211 aa). The disordered stretch occupies residues 1457–1604; it reads TGSNTSDDVS…KSSQNSPLLD (148 aa). 2 stretches are compositionally biased toward low complexity: residues 1471–1527 and 1534–1556; these read FDSP…NKNN and SSSNSSSTADFEISSSGESGRSS. Positions 1563 to 1572 are enriched in basic residues; the sequence is NNKKNRRKNS. The span at 1573–1584 shows a compositional bias: polar residues; it reads LRTPILNSLLSP.

Belongs to the G-protein coupled receptor 3 family. GABA-B receptor subfamily.

The protein resides in the membrane. In Dictyostelium discoideum (Social amoeba), this protein is Metabotropic glutamate receptor-like protein R (grlR).